Reading from the N-terminus, the 549-residue chain is Glucose-6-phosphate isomerase (549 aa).

Catalysis depends on glutamate 355, which acts as the Proton donor. Residues histidine 387 and lysine 515 contribute to the active site.

It belongs to the GPI family.

Its subcellular location is the cytoplasm. It carries out the reaction alpha-D-glucose 6-phosphate = beta-D-fructose 6-phosphate. Its pathway is carbohydrate biosynthesis; gluconeogenesis. The protein operates within carbohydrate degradation; glycolysis; D-glyceraldehyde 3-phosphate and glycerone phosphate from D-glucose: step 2/4. Catalyzes the reversible isomerization of glucose-6-phosphate to fructose-6-phosphate. The protein is Glucose-6-phosphate isomerase of Histophilus somni (strain 129Pt) (Haemophilus somnus).